The primary structure comprises 163 residues: Steroid receptor-associated and regulated protein (163 aa).

The span at 1–16 (MAFSKDPRRTSLRDSS) shows a compositional bias: basic and acidic residues. Disordered stretches follow at residues 1–30 (MAFSKDPRRTSLRDSSVEMSSGTQPSCAPK) and 96–149 (ALDG…EKVK). Polar residues predominate over residues 17–26 (VEMSSGTQPS).

Interacts with 14-3-3 proteins.

Its function is as follows. May regulate the transcriptional function of androgen and estrogen receptors. In Mus musculus (Mouse), this protein is Steroid receptor-associated and regulated protein.